The sequence spans 39 residues: Small basic protein 1 (39 aa).

Residue Gln-1 is modified to Pyrrolidone carboxylic acid. Intrachain disulfides connect Cys-6–Cys-32, Cys-10–Cys-26, and Cys-14–Cys-31.

It localises to the secreted. In Anas platyrhynchos (Mallard), this protein is Small basic protein 1.